The sequence spans 276 residues: Probable ribose-5-phosphate isomerase 3, chloroplastic (276 aa).

A chloroplast-targeting transit peptide spans 1-39 (MASLSFVSSSHLTLRTPSIALRSTGSSPRTSVSFSVKAQ). Ser40 is modified (N-acetylserine). Ser108 is modified (phosphoserine).

The protein belongs to the ribose 5-phosphate isomerase family. Phosphorylated by SRK2C.

The protein resides in the plastid. Its subcellular location is the chloroplast. It catalyses the reaction aldehydo-D-ribose 5-phosphate = D-ribulose 5-phosphate. It participates in carbohydrate degradation; pentose phosphate pathway; D-ribose 5-phosphate from D-ribulose 5-phosphate (non-oxidative stage): step 1/1. Functionally, catalyzes the reversible conversion of ribose-5-phosphate to ribulose 5-phosphate. The chain is Probable ribose-5-phosphate isomerase 3, chloroplastic (RPI3) from Arabidopsis thaliana (Mouse-ear cress).